The primary structure comprises 88 residues: MGIARILSAVLFLSVLFVVTFPTLLSADHHDGRIDTCRLPSDRGRCKASFERWYFNGTTCTKFVYGGYGGNDNRFPTEKACMKRCAKA.

Residues 1–27 (MGIARILSAVLFLSVLFVVTFPTLLSA) form the signal peptide. Positions 28–33 (DHHDGR) are excised as a propeptide. The region spanning 37–85 (CRLPSDRGRCKASFERWYFNGTTCTKFVYGGYGGNDNRFPTEKACMKRC) is the BPTI/Kunitz inhibitor domain. 2 cysteine pairs are disulfide-bonded: cysteine 37/cysteine 85 and cysteine 60/cysteine 81.

The protein belongs to the venom Kunitz-type family. 01 (intermediate) subfamily. In terms of tissue distribution, expressed by the venom gland.

Its subcellular location is the secreted. Serine protease inhibitor that inhibits trypsin at a molar ratio of 1:1. In Cyriopagopus schmidti (Chinese bird spider), this protein is Kunitz-type kappaPI-theraphotoxin-Hs1d.